Here is a 126-residue protein sequence, read N- to C-terminus: MQITLLKGKLHMASVTQAELWYDGSCAIDKDLVELAGFREFEQIDIYNVDNGERFHTYVILAESGSGTISMNGAAARKVQVGDRVIIAAYGQMNEAEADEFKPKLVYLNKDNSVERTTNTIPVQKD.

S25 (schiff-base intermediate with substrate; via pyruvic acid) is an active-site residue. S25 carries the pyruvic acid (Ser) modification. T57 lines the substrate pocket. Y58 (proton donor) is an active-site residue. 73-75 (GAA) contacts substrate.

Belongs to the PanD family. As to quaternary structure, heterooctamer of four alpha and four beta subunits. It depends on pyruvate as a cofactor. In terms of processing, is synthesized initially as an inactive proenzyme, which is activated by self-cleavage at a specific serine bond to produce a beta-subunit with a hydroxyl group at its C-terminus and an alpha-subunit with a pyruvoyl group at its N-terminus.

It localises to the cytoplasm. The enzyme catalyses L-aspartate + H(+) = beta-alanine + CO2. The protein operates within cofactor biosynthesis; (R)-pantothenate biosynthesis; beta-alanine from L-aspartate: step 1/1. Functionally, catalyzes the pyruvoyl-dependent decarboxylation of aspartate to produce beta-alanine. The sequence is that of Aspartate 1-decarboxylase from Marinomonas sp. (strain MWYL1).